A 306-amino-acid chain; its full sequence is Curved DNA-binding protein (306 aa).

The J domain maps to Asp-5–Trp-69.

It is found in the cytoplasm. The protein localises to the nucleoid. DNA-binding protein that preferentially recognizes a curved DNA sequence. It is probably a functional analog of DnaJ; displays overlapping activities with DnaJ, but functions under different conditions, probably acting as a molecular chaperone in an adaptive response to environmental stresses other than heat shock. Lacks autonomous chaperone activity; binds native substrates and targets them for recognition by DnaK. Its activity is inhibited by the binding of CbpM. The sequence is that of Curved DNA-binding protein from Salmonella choleraesuis (strain SC-B67).